We begin with the raw amino-acid sequence, 119 residues long: Large ribosomal subunit protein bL20 (119 aa).

This sequence belongs to the bacterial ribosomal protein bL20 family.

In terms of biological role, binds directly to 23S ribosomal RNA and is necessary for the in vitro assembly process of the 50S ribosomal subunit. It is not involved in the protein synthesizing functions of that subunit. In Chloroflexus aurantiacus (strain ATCC 29366 / DSM 635 / J-10-fl), this protein is Large ribosomal subunit protein bL20.